We begin with the raw amino-acid sequence, 506 residues long: Lysine--tRNA ligase (506 aa).

Mg(2+)-binding residues include glutamate 411 and glutamate 418.

Belongs to the class-II aminoacyl-tRNA synthetase family. Homodimer. Requires Mg(2+) as cofactor.

It localises to the cytoplasm. The catalysed reaction is tRNA(Lys) + L-lysine + ATP = L-lysyl-tRNA(Lys) + AMP + diphosphate. This Thermosynechococcus vestitus (strain NIES-2133 / IAM M-273 / BP-1) protein is Lysine--tRNA ligase.